We begin with the raw amino-acid sequence, 322 residues long: GTP 3',8-cyclase (322 aa).

The Radical SAM core domain maps to 4–229 (NFNRNIDYLR…IPVQMKKSGP (226 aa)). Arg13 provides a ligand contact to GTP. Residues Cys20 and Cys24 each contribute to the [4Fe-4S] cluster site. Tyr26 contacts S-adenosyl-L-methionine. [4Fe-4S] cluster is bound at residue Cys27. GTP is bound at residue Arg64. Position 68 (Gly68) interacts with S-adenosyl-L-methionine. Thr95 is a GTP binding site. Ser119 lines the S-adenosyl-L-methionine pocket. Lys156 contributes to the GTP binding site. Residue Met190 coordinates S-adenosyl-L-methionine. The [4Fe-4S] cluster site is built by Cys253 and Cys256. 258–260 (RLR) provides a ligand contact to GTP. A [4Fe-4S] cluster-binding site is contributed by Cys270.

The protein belongs to the radical SAM superfamily. MoaA family. In terms of assembly, monomer and homodimer. The cofactor is [4Fe-4S] cluster.

The enzyme catalyses GTP + AH2 + S-adenosyl-L-methionine = (8S)-3',8-cyclo-7,8-dihydroguanosine 5'-triphosphate + 5'-deoxyadenosine + L-methionine + A + H(+). Its pathway is cofactor biosynthesis; molybdopterin biosynthesis. Catalyzes the cyclization of GTP to (8S)-3',8-cyclo-7,8-dihydroguanosine 5'-triphosphate. The chain is GTP 3',8-cyclase from Thermodesulfovibrio yellowstonii (strain ATCC 51303 / DSM 11347 / YP87).